The following is a 342-amino-acid chain: Anthranilate phosphoribosyltransferase (342 aa).

5-phospho-alpha-D-ribose 1-diphosphate contacts are provided by residues Gly83, 86–87 (GD), Thr91, 93–96 (NIST), 111–119 (KHGGRSVSS), and Ser123. Gly83 lines the anthranilate pocket. Residue Ser95 participates in Mg(2+) binding. Position 169 (Arg169) interacts with anthranilate. The Mg(2+) site is built by Asp228 and Glu229.

It belongs to the anthranilate phosphoribosyltransferase family. As to quaternary structure, homodimer. Mg(2+) serves as cofactor.

It carries out the reaction N-(5-phospho-beta-D-ribosyl)anthranilate + diphosphate = 5-phospho-alpha-D-ribose 1-diphosphate + anthranilate. It functions in the pathway amino-acid biosynthesis; L-tryptophan biosynthesis; L-tryptophan from chorismate: step 2/5. Its function is as follows. Catalyzes the transfer of the phosphoribosyl group of 5-phosphorylribose-1-pyrophosphate (PRPP) to anthranilate to yield N-(5'-phosphoribosyl)-anthranilate (PRA). The sequence is that of Anthranilate phosphoribosyltransferase from Laribacter hongkongensis (strain HLHK9).